Here is a 271-residue protein sequence, read N- to C-terminus: 3-methyl-2-oxobutanoate hydroxymethyltransferase (271 aa).

Mg(2+) contacts are provided by D53 and D92. 3-methyl-2-oxobutanoate-binding positions include 53–54 (DS), D92, and K120. E122 lines the Mg(2+) pocket. The active-site Proton acceptor is the E189.

The protein belongs to the PanB family. In terms of assembly, homodecamer; pentamer of dimers. Mg(2+) serves as cofactor.

Its subcellular location is the cytoplasm. It catalyses the reaction 3-methyl-2-oxobutanoate + (6R)-5,10-methylene-5,6,7,8-tetrahydrofolate + H2O = 2-dehydropantoate + (6S)-5,6,7,8-tetrahydrofolate. Its pathway is cofactor biosynthesis; (R)-pantothenate biosynthesis; (R)-pantoate from 3-methyl-2-oxobutanoate: step 1/2. Its function is as follows. Catalyzes the reversible reaction in which hydroxymethyl group from 5,10-methylenetetrahydrofolate is transferred onto alpha-ketoisovalerate to form ketopantoate. This is 3-methyl-2-oxobutanoate hydroxymethyltransferase from Paraburkholderia phymatum (strain DSM 17167 / CIP 108236 / LMG 21445 / STM815) (Burkholderia phymatum).